The chain runs to 359 residues: Fructose-bisphosphate aldolase (359 aa).

Thr11 is subject to Phosphothreonine. Lys27 participates in a covalent cross-link: Glycyl lysine isopeptide (Lys-Gly) (interchain with G-Cter in ubiquitin). Residues Ser56 and Ser63 each carry the phosphoserine modification. Ser63 provides a ligand contact to D-glyceraldehyde 3-phosphate. A Glycyl lysine isopeptide (Lys-Gly) (interchain with G-Cter in ubiquitin) cross-link involves residue Lys73. Phosphoserine is present on residues Ser76 and Ser83. A Glycyl lysine isopeptide (Lys-Gly) (interchain with G-Cter in ubiquitin) cross-link involves residue Lys85. At Ser96 the chain carries Phosphoserine. The active-site Proton donor is Asp110. Zn(2+) is bound by residues His111 and Asp145. Residue Ser147 is modified to Phosphoserine. Thr150 carries the post-translational modification Phosphothreonine. Position 175 (Glu175) interacts with Zn(2+). Phosphothreonine is present on Thr179. His227 is a Zn(2+) binding site. Gly228 is a binding site for dihydroxyacetone phosphate. A Zn(2+)-binding site is contributed by His265. Dihydroxyacetone phosphate contacts are provided by residues 266–268 (GGS) and 287–290 (NLDT). The residue at position 268 (Ser268) is a Phosphoserine. Thr290 carries the post-translational modification Phosphothreonine. Lys308 participates in a covalent cross-link: Glycyl lysine isopeptide (Lys-Gly) (interchain with G-Cter in ubiquitin). Position 310 is a phosphotyrosine (Tyr310). Ser313 bears the Phosphoserine mark.

This sequence belongs to the class II fructose-bisphosphate aldolase family. As to quaternary structure, homodimer. Zn(2+) is required as a cofactor.

It carries out the reaction beta-D-fructose 1,6-bisphosphate = D-glyceraldehyde 3-phosphate + dihydroxyacetone phosphate. It participates in carbohydrate degradation; glycolysis; D-glyceraldehyde 3-phosphate and glycerone phosphate from D-glucose: step 4/4. Catalyzes the aldol condensation of dihydroxyacetone phosphate (DHAP or glycerone-phosphate) with glyceraldehyde 3-phosphate (G3P) to form fructose 1,6-bisphosphate (FBP) in gluconeogenesis and the reverse reaction in glycolysis. The polypeptide is Fructose-bisphosphate aldolase (FBA1) (Saccharomyces cerevisiae (strain ATCC 204508 / S288c) (Baker's yeast)).